We begin with the raw amino-acid sequence, 445 residues long: Putative aldehyde dehydrogenase AldX (445 aa).

Residues glutamate 214 and cysteine 248 contribute to the active site.

The protein belongs to the aldehyde dehydrogenase family.

It carries out the reaction an aldehyde + NAD(+) + H2O = a carboxylate + NADH + 2 H(+). The polypeptide is Putative aldehyde dehydrogenase AldX (aldX) (Bacillus subtilis (strain 168)).